Here is a 56-residue protein sequence, read N- to C-terminus: MVTRFLGPRYRELVKNWVPTAYTWGAVGAVGLVWATDWRLILDWVPYINGKFKKDN.

At 1–12 the chain is on the mitochondrial matrix side; the sequence is MVTRFLGPRYRE. Residues 13-35 form a helical membrane-spanning segment; it reads LVKNWVPTAYTWGAVGAVGLVWA. Residues 36-56 lie on the Mitochondrial intermembrane side of the membrane; the sequence is TDWRLILDWVPYINGKFKKDN.

It belongs to the UQCR11/QCR10 family. In terms of assembly, component of the ubiquinol-cytochrome c oxidoreductase (cytochrome b-c1 complex, complex III, CIII), a multisubunit enzyme composed of 11 subunits. The complex is composed of 3 respiratory subunits cytochrome b, cytochrome c1 and Rieske protein UQCRFS1, 2 core protein subunits UQCRC1/QCR1 and UQCRC2/QCR2, and 6 low-molecular weight protein subunits UQCRH/QCR6, UQCRB/QCR7, UQCRQ/QCR8, UQCR10/QCR9, UQCR11/QCR10 and subunit 9, the cleavage product of Rieske protein UQCRFS1. The complex exists as an obligatory dimer and forms supercomplexes (SCs) in the inner mitochondrial membrane with NADH-ubiquinone oxidoreductase (complex I, CI) and cytochrome c oxidase (complex IV, CIV), resulting in different assemblies (supercomplex SCI(1)III(2)IV(1) and megacomplex MCI(2)III(2)IV(2)).

Its subcellular location is the mitochondrion inner membrane. In terms of biological role, component of the ubiquinol-cytochrome c oxidoreductase, a multisubunit transmembrane complex that is part of the mitochondrial electron transport chain which drives oxidative phosphorylation. The respiratory chain contains 3 multisubunit complexes succinate dehydrogenase (complex II, CII), ubiquinol-cytochrome c oxidoreductase (cytochrome b-c1 complex, complex III, CIII) and cytochrome c oxidase (complex IV, CIV), that cooperate to transfer electrons derived from NADH and succinate to molecular oxygen, creating an electrochemical gradient over the inner membrane that drives transmembrane transport and the ATP synthase. The cytochrome b-c1 complex catalyzes electron transfer from ubiquinol to cytochrome c, linking this redox reaction to translocation of protons across the mitochondrial inner membrane, with protons being carried across the membrane as hydrogens on the quinol. In the process called Q cycle, 2 protons are consumed from the matrix, 4 protons are released into the intermembrane space and 2 electrons are passed to cytochrome c. QCR10 has a role in CIII assembly and RIP1 stability. The sequence is that of Cytochrome b-c1 complex subunit 10 (UQCR11) from Homo sapiens (Human).